The following is a 387-amino-acid chain: 3-ketoacyl-CoA thiolase (387 aa).

Cys-91 functions as the Acyl-thioester intermediate in the catalytic mechanism. Active-site proton acceptor residues include His-343 and Cys-373.

Belongs to the thiolase-like superfamily. Thiolase family. Heterotetramer of two alpha chains (FadB) and two beta chains (FadA).

It localises to the cytoplasm. It catalyses the reaction an acyl-CoA + acetyl-CoA = a 3-oxoacyl-CoA + CoA. It participates in lipid metabolism; fatty acid beta-oxidation. In terms of biological role, catalyzes the final step of fatty acid oxidation in which acetyl-CoA is released and the CoA ester of a fatty acid two carbons shorter is formed. This is 3-ketoacyl-CoA thiolase from Shewanella frigidimarina (strain NCIMB 400).